A 196-amino-acid polypeptide reads, in one-letter code: MDVTIQHPWFKRALGPFYPSRLFDQFFGEGLFEYDLLPFLSSTISPYYRQSLFRTVLDSGISELMTHMWFVMHQPHAGNPKNNPVKVRSDRDKFVIFLDVKHFSPEDLTVKVLEDFVEIHGKHNERQDDHGYISREFHRRYRLPSNVDQSALSCSLSADGMLTFSGPKVQSGLDAGHSERAIPVSREEKPSSAPSS.

At M1 the chain carries N-acetylmethionine. The interval 1 to 63 is required for complex formation with BFSP1 and BFSP2; sequence MDVTIQHPWF…RTVLDSGISE (63 aa). Q6 carries the post-translational modification Deamidated glutamine; partial. Phosphoserine is present on S45. Deamidated glutamine; partial is present on Q50. The sHSP domain occupies 76-185; sequence HAGNPKNNPV…GHSERAIPVS (110 aa). N6-acetyllysine is present on residues K93 and K122. H123 serves as a coordination point for Zn(2+). A Deamidated asparagine; partial modification is found at N124. Zn(2+)-binding residues include E125 and H130. S145 bears the Phosphoserine mark. At N146 the chain carries Deamidated asparagine; partial. The disordered stretch occupies residues 168 to 196; sequence KVQSGLDAGHSERAIPVSREEKPSSAPSS. Residue Q170 is modified to Deamidated glutamine; partial. The span at 176–190 shows a compositional bias: basic and acidic residues; the sequence is GHSERAIPVSREEKP. A Zn(2+)-binding site is contributed by H177. Residue S185 is glycosylated (O-linked (GlcNAc) serine).

The protein belongs to the small heat shock protein (HSP20) family. In terms of assembly, heteropolymer composed of three CRYAA and one CRYAB subunits. Inter-subunit bridging via zinc ions enhances stability, which is crucial as there is no protein turn over in the lens. Can also form homodimers and homotetramers (dimers of dimers) which serve as the building blocks of homooligomers. Within homooligomers, the zinc-binding motif is created from residues of 3 different molecules. His-123 and Glu-125 from one molecule are ligands of the zinc ion, and His-130 and His-177 residues from additional molecules complete the site with tetrahedral coordination geometry. Part of a complex required for lens intermediate filament formation composed of BFSP1, BFSP2 and CRYAA. Acetylation at Lys-93 may increase chaperone activity. Post-translationally, undergoes age-dependent proteolytical cleavage at the C-terminus.

Its subcellular location is the cytoplasm. The protein localises to the nucleus. Contributes to the transparency and refractive index of the lens. Acts as a chaperone, preventing aggregation of various proteins under a wide range of stress conditions. Required for the correct formation of lens intermediate filaments as part of a complex composed of BFSP1, BFSP2 and CRYAA. This Mus musculus (Mouse) protein is Alpha-crystallin A chain (Cryaa).